The chain runs to 156 residues: Small ribosomal subunit protein uS7 (156 aa).

It belongs to the universal ribosomal protein uS7 family. As to quaternary structure, part of the 30S ribosomal subunit. Contacts proteins S9 and S11.

One of the primary rRNA binding proteins, it binds directly to 16S rRNA where it nucleates assembly of the head domain of the 30S subunit. Is located at the subunit interface close to the decoding center, probably blocks exit of the E-site tRNA. This chain is Small ribosomal subunit protein uS7, found in Alkalilimnicola ehrlichii (strain ATCC BAA-1101 / DSM 17681 / MLHE-1).